Here is a 528-residue protein sequence, read N- to C-terminus: Chromosomal replication initiator protein DnaA (528 aa).

Residues 1–104 are domain I, interacts with DnaA modulators; that stretch reads MNDDPNALAR…PVDDEPESDP (104 aa). The tract at residues 95 to 158 is disordered; the sequence is PVDDEPESDP…TDFEEVDDDR (64 aa). Basic and acidic residues predominate over residues 104 to 123; it reads PPSRDHRPEPEPLHTPRHLE. Residues 105-187 are domain II; the sequence is PSRDHRPEPE…GPAPSATGGN (83 aa). Acidic residues predominate over residues 149 to 158; sequence TDFEEVDDDR. Residues 188–404 are domain III, AAA+ region; the sequence is SLNAKYTFDT…GALIRVTAFA (217 aa). ATP-binding residues include glycine 232, glycine 234, lysine 235, and threonine 236. Residues 405 to 528 are domain IV, binds dsDNA; the sequence is SLNRQPLDLT…TARIKQRSKR (124 aa).

It belongs to the DnaA family. As to quaternary structure, oligomerizes as a right-handed, spiral filament on DNA at oriC.

The protein resides in the cytoplasm. In terms of biological role, plays an essential role in the initiation and regulation of chromosomal replication. ATP-DnaA binds to the origin of replication (oriC) to initiate formation of the DNA replication initiation complex once per cell cycle. Binds the DnaA box (a 9 base pair repeat at the origin) and separates the double-stranded (ds)DNA. Forms a right-handed helical filament on oriC DNA; dsDNA binds to the exterior of the filament while single-stranded (ss)DNA is stabiized in the filament's interior. The ATP-DnaA-oriC complex binds and stabilizes one strand of the AT-rich DNA unwinding element (DUE), permitting loading of DNA polymerase. After initiation quickly degrades to an ADP-DnaA complex that is not apt for DNA replication. Binds acidic phospholipids. This is Chromosomal replication initiator protein DnaA from Rhodococcus jostii (strain RHA1).